Consider the following 188-residue polypeptide: GTPase KRas (188 aa).

M1 is modified (N-acetylmethionine). T2 is modified (N-acetylthreonine; in GTPase KRas, N-terminally processed). GTP contacts are provided by residues 10 to 18 (GAGGVGKSA), 29 to 35 (VDEYDPT), and 59 to 60 (AG). The Effector region motif lies at 32-40 (YDPTIEDSY). K104 is subject to N6-acetyllysine. 116–119 (NKCD) is a GTP binding site. The interval 166–185 (HKEKMSKDGKKKKKKSKTKC) is hypervariable region. A disordered region spans residues 167–188 (KEKMSKDGKKKKKKSKTKCIIM). C185 bears the Cysteine methyl ester mark. The S-farnesyl cysteine moiety is linked to residue C185. A propeptide spans 186 to 188 (IIM) (removed in mature form).

This sequence belongs to the small GTPase superfamily. Ras family. In terms of assembly, interacts with PHLPP. Interacts (active GTP-bound form preferentially) with RGS14. Interacts (when farnesylated) with PDE6D; this promotes dissociation from the cell membrane. Interacts with SOS1. Interacts (when farnesylated) with GPR31. Interacts with RAP1GDS1. Interacts (active GTP-bound form) with both SHOC2 and PP1c (all isoforms) to form a tertiary complex; SHOC2 and PP1c preferably bind M-Ras/MRAS, but they also bind K-Ras/KRAS, N-Ras/NRAS and H-Ras/HRAS. Interacts (GTP-bound form) with MAPKAP1/SIN1; inhibiting K-Ras/KRAS activity. Acetylation at Lys-104 prevents interaction with guanine nucleotide exchange factors (GEFs).

The protein localises to the cell membrane. It is found in the cytoplasm. Its subcellular location is the cytosol. It catalyses the reaction GTP + H2O = GDP + phosphate + H(+). Its activity is regulated as follows. Alternates between an inactive form bound to GDP and an active form bound to GTP. Activated by a guanine nucleotide-exchange factor (GEF) and inactivated by a GTPase-activating protein (GAP). Interaction with SOS1 promotes exchange of bound GDP to GTP. Functionally, ras proteins bind GDP/GTP and possess intrinsic GTPase activity. Plays an important role in the regulation of cell proliferation. Plays a role in promoting oncogenic events by inducing transcriptional silencing of tumor suppressor genes (TSGs) in colorectal cancer (CRC) cells in a ZNF304-dependent manner. This is GTPase KRas (KRAS) from Monodelphis domestica (Gray short-tailed opossum).